Reading from the N-terminus, the 251-residue chain is tRNA (guanine-N(1)-)-methyltransferase (251 aa).

Residues Gly-114 and 134 to 139 (IGDYVL) contribute to the S-adenosyl-L-methionine site.

Belongs to the RNA methyltransferase TrmD family. As to quaternary structure, homodimer.

It is found in the cytoplasm. It carries out the reaction guanosine(37) in tRNA + S-adenosyl-L-methionine = N(1)-methylguanosine(37) in tRNA + S-adenosyl-L-homocysteine + H(+). Specifically methylates guanosine-37 in various tRNAs. The polypeptide is tRNA (guanine-N(1)-)-methyltransferase (Pelotomaculum thermopropionicum (strain DSM 13744 / JCM 10971 / SI)).